The following is a 252-amino-acid chain: Chitooligosaccharide deacetylase (252 aa).

2 residues coordinate Mg(2+): His61 and His125.

The protein belongs to the YdjC deacetylase family. ChbG subfamily. In terms of assembly, homodimer. Requires Mg(2+) as cofactor.

The protein resides in the cytoplasm. It carries out the reaction N,N'-diacetylchitobiose + H2O = N-acetyl-beta-D-glucosaminyl-(1-&gt;4)-D-glucosamine + acetate. The enzyme catalyses diacetylchitobiose-6'-phosphate + H2O = N'-monoacetylchitobiose-6'-phosphate + acetate. Its pathway is glycan degradation; chitin degradation. Functionally, involved in the degradation of chitin. ChbG is essential for growth on the acetylated chitooligosaccharides chitobiose and chitotriose but is dispensable for growth on cellobiose and chitosan dimer, the deacetylated form of chitobiose. Deacetylation of chitobiose-6-P and chitotriose-6-P is necessary for both the activation of the chb promoter by the regulatory protein ChbR and the hydrolysis of phosphorylated beta-glucosides by the phospho-beta-glucosidase ChbF. Catalyzes the removal of only one acetyl group from chitobiose-6-P to yield monoacetylchitobiose-6-P, the inducer of ChbR and the substrate of ChbF. The sequence is that of Chitooligosaccharide deacetylase from Salmonella heidelberg (strain SL476).